Consider the following 424-residue polypeptide: Enolase (424 aa).

A (2R)-2-phosphoglycerate-binding site is contributed by Q165. The Proton donor role is filled by E207. The Mg(2+) site is built by D244, E283, and D310. (2R)-2-phosphoglycerate-binding residues include K335, R364, S365, and K386. The active-site Proton acceptor is K335.

It belongs to the enolase family. Mg(2+) is required as a cofactor.

It localises to the cytoplasm. The protein resides in the secreted. Its subcellular location is the cell surface. It carries out the reaction (2R)-2-phosphoglycerate = phosphoenolpyruvate + H2O. It functions in the pathway carbohydrate degradation; glycolysis; pyruvate from D-glyceraldehyde 3-phosphate: step 4/5. Catalyzes the reversible conversion of 2-phosphoglycerate (2-PG) into phosphoenolpyruvate (PEP). It is essential for the degradation of carbohydrates via glycolysis. The chain is Enolase from Chlamydia felis (strain Fe/C-56) (Chlamydophila felis).